The chain runs to 426 residues: NADH-quinone oxidoreductase subunit H 1 (426 aa).

10 consecutive transmembrane segments (helical) span residues 22–42 (LWAT…VMLM), 91–111 (FLFW…YLVI), 124–144 (IGVL…VMAG), 163–183 (MVSY…MTSL), 206–226 (FIFK…IAMV), 258–278 (LFFL…VTLW), 299–319 (FSVF…IGWV), 331–351 (AIGL…LLIP), 357–377 (VSDI…YIWY), and 392–412 (IGWK…AVLG).

The protein belongs to the complex I subunit 1 family. In terms of assembly, NDH-1 is composed of 14 different subunits. Subunits NuoA, H, J, K, L, M, N constitute the membrane sector of the complex.

It localises to the cell inner membrane. It carries out the reaction a quinone + NADH + 5 H(+)(in) = a quinol + NAD(+) + 4 H(+)(out). NDH-1 shuttles electrons from NADH, via FMN and iron-sulfur (Fe-S) centers, to quinones in the respiratory chain. The immediate electron acceptor for the enzyme in this species is believed to be ubiquinone. Couples the redox reaction to proton translocation (for every two electrons transferred, four hydrogen ions are translocated across the cytoplasmic membrane), and thus conserves the redox energy in a proton gradient. This subunit may bind ubiquinone. The protein is NADH-quinone oxidoreductase subunit H 1 of Koribacter versatilis (strain Ellin345).